A 923-amino-acid chain; its full sequence is Protocadherin gamma-B5 (923 aa).

The N-terminal stretch at 1 to 30 (MGRGTGELGRAERLPVLFLFLLSLFCPALC) is a signal peptide. Cadherin domains are found at residues 31-133 (EQIR…TPKF), 134-242 (TQNS…PPVF), 243-343 (NRDV…SPEV), 344-448 (TFHS…APVF), 449-558 (HQAS…APRV), and 566-671 (DGSA…LPDI). Residues 31 to 687 (EQIRYRIPEE…SDPQAELQFY (657 aa)) are Extracellular-facing. N-linked (GlcNAc...) asparagine glycans are attached at residues Asn-415 and Asn-541. The chain crosses the membrane as a helical span at residues 688–708 (LVVALALISVLFLLAVILAIA). The Cytoplasmic segment spans residues 709-923 (LRLRRSSSPA…KKKSGKKEKK (215 aa)). Disordered regions lie at residues 794-832 (TSHP…WPNN) and 893-923 (ATLT…KEKK). Over residues 807-832 (WRFSQAQRPGTSGSQNGDDTGTWPNN) the composition is skewed to polar residues. Residues 913-923 (NKKKSGKKEKK) show a composition bias toward basic residues.

The protein localises to the cell membrane. Its function is as follows. Potential calcium-dependent cell-adhesion protein. May be involved in the establishment and maintenance of specific neuronal connections in the brain. This Pan troglodytes (Chimpanzee) protein is Protocadherin gamma-B5 (PCDHGB5).